The following is a 242-amino-acid chain: Myb-related protein MYBAS2 (242 aa).

HTH myb-type domains lie at 5-61 (REEI…HPGL) and 62-112 (KRGR…RKKA). A DNA-binding region (H-T-H motif) is located at residues 33 to 57 (WDFIAKVSGLNRTGKSCRLRWVNYL). The short motif at 62–65 (KRGR) is the Bipartite nuclear localization signal 1 element. The H-T-H motif DNA-binding region spans 85–108 (WSRIARRLPGRTDNEIKNYWRTHM). The Bipartite nuclear localization signal 2 motif lies at 109–117 (RKKAQERKS). A disordered region spans residues 110–133 (KKAQERKSNMSPSSSSSSLTYQSC). Positions 118–133 (NMSPSSSSSSLTYQSC) are enriched in low complexity.

The protein localises to the nucleus. Transcription factor. The sequence is that of Myb-related protein MYBAS2 (MYBAS2) from Oryza sativa subsp. japonica (Rice).